A 377-amino-acid chain; its full sequence is Malate dehydrogenase, cytoplasmic (377 aa).

The Pro/N-degron motif lies at 2–5; that stretch reads PHSV. Thr6 is modified (phosphothreonine). NAD(+)-binding positions include 20–26 and Asp57; that span reads GAAGGIG. Substrate is bound by residues Arg106 and Arg112. Residues Asn119 and 144–146 contribute to the NAD(+) site; that span reads ISN. Residues Asn146 and Arg185 each coordinate substrate. His215 functions as the Proton acceptor in the catalytic mechanism. Met266 lines the NAD(+) pocket.

This sequence belongs to the LDH/MDH superfamily. MDH type 1 family. As to quaternary structure, homodimer. In terms of processing, targeted for proteasomal degradation when cells are shifted to glucose-containing growth medium.

The protein localises to the cytoplasm. It carries out the reaction (S)-malate + NAD(+) = oxaloacetate + NADH + H(+). In terms of biological role, the isoenzyme MDH2 may function primarily in the glyoxylate cycle. The polypeptide is Malate dehydrogenase, cytoplasmic (MDH2) (Saccharomyces cerevisiae (strain ATCC 204508 / S288c) (Baker's yeast)).